We begin with the raw amino-acid sequence, 220 residues long: N-(5'-phosphoribosyl)anthranilate isomerase (220 aa).

The protein belongs to the TrpF family.

The catalysed reaction is N-(5-phospho-beta-D-ribosyl)anthranilate = 1-(2-carboxyphenylamino)-1-deoxy-D-ribulose 5-phosphate. It functions in the pathway amino-acid biosynthesis; L-tryptophan biosynthesis; L-tryptophan from chorismate: step 3/5. In Bordetella petrii (strain ATCC BAA-461 / DSM 12804 / CCUG 43448), this protein is N-(5'-phosphoribosyl)anthranilate isomerase.